A 498-amino-acid chain; its full sequence is ATP synthase subunit beta, chloroplastic (498 aa).

172–179 (GGAGVGKT) is a binding site for ATP.

It belongs to the ATPase alpha/beta chains family. As to quaternary structure, F-type ATPases have 2 components, CF(1) - the catalytic core - and CF(0) - the membrane proton channel. CF(1) has five subunits: alpha(3), beta(3), gamma(1), delta(1), epsilon(1). CF(0) has four main subunits: a(1), b(1), b'(1) and c(9-12).

It is found in the plastid. It localises to the chloroplast thylakoid membrane. The enzyme catalyses ATP + H2O + 4 H(+)(in) = ADP + phosphate + 5 H(+)(out). Its function is as follows. Produces ATP from ADP in the presence of a proton gradient across the membrane. The catalytic sites are hosted primarily by the beta subunits. In Spinacia oleracea (Spinach), this protein is ATP synthase subunit beta, chloroplastic.